The chain runs to 1072 residues: Integrin alpha-6 (1072 aa).

Residues 1-18 (MAAALLLYLPLLPGLAGA) form the signal peptide. The Extracellular segment spans residues 19–1010 (FNLDAENVIG…FPAKPVALYT (992 aa)). 7 FG-GAP repeats span residues 23-88 (AENV…DTRC), 94-160 (DEDT…IKDD), 170-223 (DGRL…FYDL), 238-295 (RQDK…QRAL), 296-357 (SLEH…KWEG), 358-413 (IKPI…GINT), and 414-476 (EPAQ…VQPD). A glycan (N-linked (GlcNAc...) asparagine) is linked at Asn-71. 3 disulfide bridges follow: Cys-79-Cys-88, Cys-125-Cys-148, and Cys-169-Cys-182. 2 N-linked (GlcNAc...) asparagine glycosylation sites follow: Asn-217 and Asn-278. Ca(2+)-binding residues include Asp-318, Asn-320, Asp-322, and Asp-326. The N-linked (GlcNAc...) asparagine glycan is linked to Asn-364. Ca(2+) contacts are provided by Asp-380, Asn-382, Asp-384, Tyr-386, Asp-388, Asp-438, Asp-440, Asn-442, Tyr-444, and Asp-446. Cys-498 and Cys-557 are joined by a disulfide. N-linked (GlcNAc...) asparagine glycosylation is found at Asn-515 and Asn-609. 2 disulfide bridges follow: Cys-625–Cys-631 and Cys-725–Cys-736. N-linked (GlcNAc...) asparagine glycans are attached at residues Asn-730, Asn-747, and Asn-780. Cystine bridges form between Cys-880-Cys-927 and Cys-933-Cys-938. A glycan (N-linked (GlcNAc...) asparagine) is linked at Asn-957. A helical membrane pass occupies residues 1011 to 1036 (GVPWWIIAVAIFAGVLMLALLVFLLW). Residues 1037 to 1072 (KCGFFKRSKKDHYDATYHKAEIHAQPSDKERLTSDA) are Cytoplasmic-facing. Residue Cys-1038 is the site of S-palmitoyl cysteine; by DHHC3 attachment. The GFFKR motif motif lies at 1039–1043 (GFFKR). Ser-1070 carries the post-translational modification Phosphoserine; by CaMK2.

This sequence belongs to the integrin alpha chain family. In terms of assembly, heterodimer of an alpha and a beta subunit. The alpha subunit is composed of a heavy and a light chain linked by a disulfide bond. Alpha-6 associates with either beta-1 (ITGB1) or beta-4 (ITGB4) to form ITGA6:ITGB1 and ITGA6:ITGB4, respectively. Phosphorylated in vivo.

It is found in the cell membrane. Its function is as follows. Integrin alpha-6/beta-1 (ITGA6:ITGB1) is a receptor for laminin on platelets. Integrin alpha-6/beta-1 (ITGA6:ITGB1) is present in oocytes and is involved in sperm-egg fusion. Integrin alpha-6/beta-4 (ITGA6:ITGB4) is a receptor for laminin in epithelial cells and it plays a critical structural role in the hemidesmosome. This chain is Integrin alpha-6 (ITGA6), found in Gallus gallus (Chicken).